The primary structure comprises 334 residues: Formamidase (334 aa).

A CN hydrolase domain is found at 14-260 (FLVAAIQFPV…WEIVTGEIYP (247 aa)). Glu60 acts as the Proton acceptor in catalysis. The active-site Proton donor is Lys133. The active-site Nucleophile is Cys166.

It belongs to the carbon-nitrogen hydrolase superfamily. Aliphatic amidase family.

The catalysed reaction is formamide + H2O = formate + NH4(+). Functionally, is an aliphatic amidase with a restricted substrate specificity, as it only hydrolyzes formamide. The protein is Formamidase of Helicobacter pylori (strain Shi470).